A 224-amino-acid chain; its full sequence is Large ribosomal subunit protein uL11c (224 aa).

The N-terminal 66 residues, 1–66 (MAQPLVAAPS…SHRRLSIVAM (66 aa)), are a transit peptide targeting the chloroplast. Lysine 75 and lysine 111 each carry N6,N6,N6-trimethyllysine.

In terms of assembly, component of the chloroplast large ribosomal subunit (LSU). Mature 70S chloroplast ribosomes of higher plants consist of a small (30S) and a large (50S) subunit. The 30S small subunit contains 1 molecule of ribosomal RNA (16S rRNA) and 24 different proteins. The 50S large subunit contains 3 rRNA molecules (23S, 5S and 4.5S rRNA) and 33 different proteins.

It localises to the plastid. It is found in the chloroplast. Its function is as follows. Component of the chloroplast ribosome (chloro-ribosome), a dedicated translation machinery responsible for the synthesis of chloroplast genome-encoded proteins, including proteins of the transcription and translation machinery and components of the photosynthetic apparatus. This is Large ribosomal subunit protein uL11c (rpl11) from Spinacia oleracea (Spinach).